The primary structure comprises 488 residues: Phenylalanine--tRNA ligase alpha subunit (488 aa).

Residues threonine 315, 354 to 356, phenylalanine 394, and phenylalanine 419 each bind L-phenylalanine; that span reads QLD.

This sequence belongs to the class-II aminoacyl-tRNA synthetase family. Phe-tRNA synthetase alpha subunit type 2 subfamily. In terms of assembly, tetramer of two alpha and two beta subunits. Requires Mg(2+) as cofactor.

It is found in the cytoplasm. It carries out the reaction tRNA(Phe) + L-phenylalanine + ATP = L-phenylalanyl-tRNA(Phe) + AMP + diphosphate + H(+). This chain is Phenylalanine--tRNA ligase alpha subunit, found in Pyrobaculum calidifontis (strain DSM 21063 / JCM 11548 / VA1).